The following is a 189-amino-acid chain: Large ribosomal subunit protein eL18 (189 aa).

Belongs to the eukaryotic ribosomal protein eL18 family.

It is found in the cytoplasm. This chain is Large ribosomal subunit protein eL18 (RpL18), found in Anopheles gambiae (African malaria mosquito).